A 780-amino-acid polypeptide reads, in one-letter code: Exocyst complex component 3-like protein (780 aa).

It belongs to the SEC6 family.

The protein resides in the cytoplasmic vesicle. It localises to the secretory vesicle. As part of the exocyst, may play a role in regulated exocytosis. This is Exocyst complex component 3-like protein (exoc3l1) from Danio rerio (Zebrafish).